Here is a 419-residue protein sequence, read N- to C-terminus: UDP-N-acetylglucosamine 1-carboxyvinyltransferase (419 aa).

Phosphoenolpyruvate is bound at residue 22 to 23 (KN). Position 95 (Arg95) interacts with UDP-N-acetyl-alpha-D-glucosamine. Cys119 functions as the Proton donor in the catalytic mechanism. 2-(S-cysteinyl)pyruvic acid O-phosphothioketal is present on Cys119. UDP-N-acetyl-alpha-D-glucosamine is bound by residues 164 to 167 (KVSV), Asp308, and Ile330.

It belongs to the EPSP synthase family. MurA subfamily.

The protein localises to the cytoplasm. The catalysed reaction is phosphoenolpyruvate + UDP-N-acetyl-alpha-D-glucosamine = UDP-N-acetyl-3-O-(1-carboxyvinyl)-alpha-D-glucosamine + phosphate. It participates in cell wall biogenesis; peptidoglycan biosynthesis. In terms of biological role, cell wall formation. Adds enolpyruvyl to UDP-N-acetylglucosamine. The sequence is that of UDP-N-acetylglucosamine 1-carboxyvinyltransferase from Rickettsia peacockii (strain Rustic).